The following is a 25-amino-acid chain: Xenoposin precursor fragment BM2 (25 aa).

As to expression, expressed by the skin glands.

The protein localises to the secreted. Antimicrobial peptide. This chain is Xenoposin precursor fragment BM2, found in Xenopus boumbaensis (Mawa clawed frog).